The chain runs to 377 residues: Chaperone protein DnaJ (377 aa).

One can recognise a J domain in the interval 5–70 (DFYEVLGVER…SKRAAYDQYG (66 aa)). The CR-type zinc-finger motif lies at 136–214 (GTTVTIRVPT…CHGQGRVEEQ (79 aa)). 8 residues coordinate Zn(2+): cysteine 149, cysteine 152, cysteine 166, cysteine 169, cysteine 188, cysteine 191, cysteine 202, and cysteine 205. CXXCXGXG motif repeat units follow at residues 149–156 (CKTCNGSG), 166–173 (CTTCGGIG), 188–195 (CPRCHGTG), and 202–209 (CGSCHGQG).

The protein belongs to the DnaJ family. In terms of assembly, homodimer. Zn(2+) serves as cofactor.

The protein localises to the cytoplasm. In terms of biological role, participates actively in the response to hyperosmotic and heat shock by preventing the aggregation of stress-denatured proteins and by disaggregating proteins, also in an autonomous, DnaK-independent fashion. Unfolded proteins bind initially to DnaJ; upon interaction with the DnaJ-bound protein, DnaK hydrolyzes its bound ATP, resulting in the formation of a stable complex. GrpE releases ADP from DnaK; ATP binding to DnaK triggers the release of the substrate protein, thus completing the reaction cycle. Several rounds of ATP-dependent interactions between DnaJ, DnaK and GrpE are required for fully efficient folding. Also involved, together with DnaK and GrpE, in the DNA replication of plasmids through activation of initiation proteins. In Pseudomonas paraeruginosa (strain DSM 24068 / PA7) (Pseudomonas aeruginosa (strain PA7)), this protein is Chaperone protein DnaJ.